The chain runs to 357 residues: MRPARALIDLQALRHNYRLARELTGAKALAVIKADAYGHGAVRCALALEAEADGFAVACIEEALELRAAGIKAPVLLLEGFFEASELALIAEHDLWCVVHSLWQLEAIEKTPLHKPLNVWLKLDSGMHRVGLHPKDYHDAYQRLLASGKVSRIVLMTHFARADELDADATSQQIAVFEAARQGLAAECSLRNSPGVLGWPQAPSDWVRPGLMLYGATPFEVAQAEAARLQPVMTLQSRVISVRELPAGEPVGYGAKFVSPRPTRVGVVAMGYADGYPRQAPNGTPVLVAGKRTQLIGRVSMDMLSIDLTDVPQATVGSPVEFWGKQVLASEVAAHAGTIPYQIFCNLKRVPRDYIGE.

Lys-33 (proton acceptor; specific for D-alanine) is an active-site residue. At Lys-33 the chain carries N6-(pyridoxal phosphate)lysine. Arg-129 lines the substrate pocket. Tyr-253 (proton acceptor; specific for L-alanine) is an active-site residue. Met-301 contacts substrate.

The protein belongs to the alanine racemase family. Pyridoxal 5'-phosphate is required as a cofactor.

The enzyme catalyses L-alanine = D-alanine. It participates in amino-acid biosynthesis; D-alanine biosynthesis; D-alanine from L-alanine: step 1/1. Its function is as follows. Isomerizes L-alanine to D-alanine which is then likely oxidized to pyruvate by DadA. Shows racemase activity with both alanine stereoisomers, negligible activity with D-cysteine and L-serine, and exhibits no activity with the remaining natural chiral amino acids. In Pseudomonas putida (strain ATCC 47054 / DSM 6125 / CFBP 8728 / NCIMB 11950 / KT2440), this protein is Alanine racemase, catabolic.